A 195-amino-acid polypeptide reads, in one-letter code: 3-isopropylmalate dehydratase small subunit (195 aa).

This sequence belongs to the LeuD family. LeuD type 1 subfamily. Heterodimer of LeuC and LeuD.

The catalysed reaction is (2R,3S)-3-isopropylmalate = (2S)-2-isopropylmalate. It participates in amino-acid biosynthesis; L-leucine biosynthesis; L-leucine from 3-methyl-2-oxobutanoate: step 2/4. In terms of biological role, catalyzes the isomerization between 2-isopropylmalate and 3-isopropylmalate, via the formation of 2-isopropylmaleate. The chain is 3-isopropylmalate dehydratase small subunit from Corynebacterium kroppenstedtii (strain DSM 44385 / JCM 11950 / CIP 105744 / CCUG 35717).